We begin with the raw amino-acid sequence, 288 residues long: MAEKKQWHETLHDQFGQYFAVDNVLYHEKTDHQDLIIFENAAFGRVMALDGVVQTTERDEFIYHEMMTHVPLLAHGHAKHVLIIGGGDGAMLREVTRHKNVESITMVEIDAGVVSFCRQYLPNHNAGSYDDPRFKLVIDDGVNFVNQTSQTFDVIISDCTDPIGPGESLFTSAFYEGCKRCLNPSGIFVAQNGVCFLQQEEAIDSHRKLSHYFSDVGFYQTAIPTYYGGIMTFAWATDNDALRHLSTEIIQARFLASGLKCRYYNPAIHTAAFALPQYLQDALASQPS.

The PABS domain maps to 9 to 238 (ETLHDQFGQY…GIMTFAWATD (230 aa)). Q33 is a binding site for S-methyl-5'-thioadenosine. Spermidine is bound by residues H64 and D88. Residues E108 and 140–141 (DG) each bind S-methyl-5'-thioadenosine. The active-site Proton acceptor is the D158. A spermidine-binding site is contributed by 158 to 161 (DCTD). Residue P165 coordinates S-methyl-5'-thioadenosine.

The protein belongs to the spermidine/spermine synthase family. As to quaternary structure, homodimer or homotetramer.

Its subcellular location is the cytoplasm. The catalysed reaction is S-adenosyl 3-(methylsulfanyl)propylamine + putrescine = S-methyl-5'-thioadenosine + spermidine + H(+). Its pathway is amine and polyamine biosynthesis; spermidine biosynthesis; spermidine from putrescine: step 1/1. Functionally, catalyzes the irreversible transfer of a propylamine group from the amino donor S-adenosylmethioninamine (decarboxy-AdoMet) to putrescine (1,4-diaminobutane) to yield spermidine. The polypeptide is Polyamine aminopropyltransferase (Shigella boydii serotype 18 (strain CDC 3083-94 / BS512)).